The sequence spans 131 residues: Heterochromatin silencing protein rss1 (131 aa).

In terms of assembly, monomer.

It localises to the cytoplasm. The protein localises to the nucleus. Its function is as follows. Required for heterochromatin silencing within pericentromeric repeats and at telomers. Facilitates the recruitment of Clr6 histone deacetylase (HDAC) by interacting with histones. Also interacts with Rad25, which mediates heterochromatin silencing in DNA repeats by recruiting the RITS complex. Together with Rad25, forms a regulatory hub that defines heterochromatin silencing within tandem repeats via linking RNAi and HDAC. This Schizosaccharomyces pombe (strain 972 / ATCC 24843) (Fission yeast) protein is Heterochromatin silencing protein rss1 (rss1).